Reading from the N-terminus, the 445-residue chain is Phosphoglucosamine mutase (445 aa).

Serine 102 acts as the Phosphoserine intermediate in catalysis. Serine 102, aspartate 241, aspartate 243, and aspartate 245 together coordinate Mg(2+). Serine 102 bears the Phosphoserine mark.

This sequence belongs to the phosphohexose mutase family. It depends on Mg(2+) as a cofactor. Post-translationally, activated by phosphorylation.

The catalysed reaction is alpha-D-glucosamine 1-phosphate = D-glucosamine 6-phosphate. Catalyzes the conversion of glucosamine-6-phosphate to glucosamine-1-phosphate. The protein is Phosphoglucosamine mutase of Zymomonas mobilis subsp. mobilis (strain ATCC 31821 / ZM4 / CP4).